Reading from the N-terminus, the 109-residue chain is Large ribosomal subunit protein uL24 (109 aa).

This sequence belongs to the universal ribosomal protein uL24 family. As to quaternary structure, part of the 50S ribosomal subunit.

Functionally, one of two assembly initiator proteins, it binds directly to the 5'-end of the 23S rRNA, where it nucleates assembly of the 50S subunit. In terms of biological role, one of the proteins that surrounds the polypeptide exit tunnel on the outside of the subunit. This Geotalea uraniireducens (strain Rf4) (Geobacter uraniireducens) protein is Large ribosomal subunit protein uL24.